Reading from the N-terminus, the 130-residue chain is MSKPIRKIGSRRNERRIPKGVIHVQASFNNTIVTVTDVRGQVVSWSSAGACGFKGTKRSTPFAAQTAAENAIRTLMDQGMERAEVMISGPGPGRDTALRAIRRSGVLLSFVRDVTPMPHNGCRPPKKRRV.

This sequence belongs to the universal ribosomal protein uS11 family. Part of the 30S ribosomal subunit.

The protein resides in the plastid. It localises to the chloroplast. This is Small ribosomal subunit protein uS11c from Cycas taitungensis (Prince sago).